The following is a 354-amino-acid chain: MNTLFMHCRPGFEGEVCAEISEHAARLGVSGYAKSKPQSASAEFVCSEEGGAERLMGELRFNQLIFPRQWARGGFVELPETDRISVLLSQLADFPVFGSLWLEVLDSNEGKELSTFCRKFEVPLRKALEKAGRLVDDASRPRLLLSFISGRRVFVGVAPANNSALWPMGIPRLKFPREAPSRSTLKLEEAWHQFIPREQWEQRLGDDMTGVDLGASPGGWTYQLVRRGMLVTAIDNGPMAESLMDTGLVQHLMADGFTWQPKQPVDWMVCDIVEKPARTTSLIETWLGEGLCREAVVNLKLPMKQRYAEVRRLLDRMEATFKARKIRVSIACKQLYHDREEVTCHLRRLDLKPR.

Residues S183, 216-219 (SPGG), D235, D255, and D271 contribute to the S-adenosyl-L-methionine site. Residue K300 is the Proton acceptor of the active site.

It belongs to the class I-like SAM-binding methyltransferase superfamily. RNA methyltransferase RlmE family. RlmM subfamily. In terms of assembly, monomer.

It localises to the cytoplasm. The enzyme catalyses cytidine(2498) in 23S rRNA + S-adenosyl-L-methionine = 2'-O-methylcytidine(2498) in 23S rRNA + S-adenosyl-L-homocysteine + H(+). Catalyzes the 2'-O-methylation at nucleotide C2498 in 23S rRNA. In Pseudomonas putida (strain GB-1), this protein is Ribosomal RNA large subunit methyltransferase M.